Reading from the N-terminus, the 419-residue chain is Synaptic vesicle membrane protein VAT-1 homolog-like (419 aa).

Over residues 1 to 25 (MAKEGVEKAEETEQMIEKEAGKEPA) the composition is skewed to basic and acidic residues. Disordered stretches follow at residues 1-36 (MAKEGVEKAEETEQMIEKEAGKEPAEGGGGDGSHRL) and 384-419 (PTPLMANDSTETSEAGEEEEDHEGDSENKERMPFIQ). Phosphoserine is present on serine 392. A phosphothreonine mark is found at threonine 393 and threonine 395. Residue serine 396 is modified to Phosphoserine. Acidic residues predominate over residues 397–407 (EAGEEEEDHEG). The segment covering 408-419 (DSENKERMPFIQ) has biased composition (basic and acidic residues).

The protein belongs to the zinc-containing alcohol dehydrogenase family. Quinone oxidoreductase subfamily. In terms of tissue distribution, detected in skin fibroblasts.

The polypeptide is Synaptic vesicle membrane protein VAT-1 homolog-like (VAT1L) (Homo sapiens (Human)).